Reading from the N-terminus, the 230-residue chain is Large ribosomal subunit protein uL1 (230 aa).

This sequence belongs to the universal ribosomal protein uL1 family. In terms of assembly, part of the 50S ribosomal subunit.

Functionally, binds directly to 23S rRNA. The L1 stalk is quite mobile in the ribosome, and is involved in E site tRNA release. In terms of biological role, protein L1 is also a translational repressor protein, it controls the translation of the L11 operon by binding to its mRNA. This Desulfitobacterium hafniense (strain DSM 10664 / DCB-2) protein is Large ribosomal subunit protein uL1.